We begin with the raw amino-acid sequence, 471 residues long: Cysteine--tRNA ligase (471 aa).

Cysteine 29 provides a ligand contact to Zn(2+). The short motif at 31-41 (PTVYDYFHIGN) is the 'HIGH' region element. 3 residues coordinate Zn(2+): cysteine 212, histidine 237, and glutamate 241. The 'KMSKS' region motif lies at 269-273 (KMSKS). Lysine 272 lines the ATP pocket.

This sequence belongs to the class-I aminoacyl-tRNA synthetase family. In terms of assembly, monomer. Zn(2+) is required as a cofactor.

Its subcellular location is the cytoplasm. The catalysed reaction is tRNA(Cys) + L-cysteine + ATP = L-cysteinyl-tRNA(Cys) + AMP + diphosphate. This chain is Cysteine--tRNA ligase, found in Symbiobacterium thermophilum (strain DSM 24528 / JCM 14929 / IAM 14863 / T).